Reading from the N-terminus, the 55-residue chain is Mannose/glucose-specific lectin alpha chain (55 aa).

This sequence belongs to the leguminous lectin family. In terms of assembly, tetramer of two alpha and two beta chains.

In Lathyrus sativus (White vetchling), this protein is Mannose/glucose-specific lectin alpha chain.